The primary structure comprises 430 residues: MRIGFLGFGKSNRSLLKYLLKHQEAKFFVSEAKTLDGETKKFLEEHSVEYEEGGHTEKLLECDVVYVSPGIKPDTSMIELLSSRGAKLSTELQFFLDNVDPKKVVGITGTDGKSTATALMHHVLSERGFKSFLGGNFGTPAVEALEGEYDYYVLEMSSFQLFWSERPYLSNFLVLNISEDHLDWHSSFEEYVDSKLKPVFLQTEGDLFVYNKHIERLKDLEGVRSRKIPFWTDENFATEKELIVRGKRYTLPGNYPYQMRENVLAVSVLYMEMFNELESFLELLRDFKPLPHRMEYLGQIDGRHFYNDSKATSTHAVLGALSNFDKVVLIMCGIGKKENYSLFVEKASPKLKHLIMFGEISKELAPFVGKIPHSIVENMEEAFEKAMEVSEKGDVILLSPGGASFDMYENYAKRGEHFREIFKRHGGDEV.

109–115 (GTDGKST) contacts ATP.

This sequence belongs to the MurCDEF family.

Its subcellular location is the cytoplasm. It catalyses the reaction UDP-N-acetyl-alpha-D-muramoyl-L-alanine + D-glutamate + ATP = UDP-N-acetyl-alpha-D-muramoyl-L-alanyl-D-glutamate + ADP + phosphate + H(+). It functions in the pathway cell wall biogenesis; peptidoglycan biosynthesis. Its function is as follows. Cell wall formation. Catalyzes the addition of glutamate to the nucleotide precursor UDP-N-acetylmuramoyl-L-alanine (UMA). The polypeptide is UDP-N-acetylmuramoylalanine--D-glutamate ligase (Thermotoga petrophila (strain ATCC BAA-488 / DSM 13995 / JCM 10881 / RKU-1)).